Here is a 992-residue protein sequence, read N- to C-terminus: Meckelin (992 aa).

The N-terminal stretch at 1 to 35 (MVMRTRPLAAMAVRSCFSALTGTVYLLLVLCEVSW) is a signal peptide. At 36–516 (AQIFSFPFQR…SVKYEMNQGD (481 aa)) the chain is on the extracellular side. Positions 37–280 (QIFSFPFQRP…FHYVFEGAAG (244 aa)) are cysteine-rich. 12 disulfides stabilise this stretch: cysteine 49–cysteine 62, cysteine 65–cysteine 78, cysteine 80–cysteine 97, cysteine 100–cysteine 114, cysteine 117–cysteine 127, cysteine 129–cysteine 150, cysteine 153–cysteine 170, cysteine 173–cysteine 184, cysteine 186–cysteine 197, cysteine 237–cysteine 246, cysteine 253–cysteine 268, and cysteine 354–cysteine 375. A glycan (N-linked (GlcNAc...) asparagine) is linked at asparagine 242. A helical membrane pass occupies residues 517–545 (AFVQTDIALGVLGGLAVLSSLLKTAGWKR). Topologically, residues 546–555 (RIGSPMIDLQ) are cytoplasmic. The helical transmembrane segment at 556-587 (TVMKFLLYYAGDLANVFFIITVGTGLYWLIFF) threads the bilayer. Residues 588 to 600 (KAQKSVSVLLPMP) lie on the Extracellular side of the membrane. A helical membrane pass occupies residues 601 to 628 (VQEERFVTYVGCAFAMKALQFLHKLISQ). The Cytoplasmic portion of the chain corresponds to 629–667 (ITIDIFFIDWERPKGKVLKAVEGEGGVRSATVPVSIWRT). An intramembrane region (helical) is located at residues 668 to 676 (YFVANEWNE). Residues 668-698 (YFVANEWNEIQTVRKINPLFQVLTTLFFLEV) form a discontinuously helical membrane-spanning segment. The stretch at 677–685 (IQTVRKINP) is an intramembrane region. The segment at residues 686–698 (LFQVLTTLFFLEV) is an intramembrane region (helical). Over 699–728 (VGFKNLALMDPSSSLSRSLSDYAAPYSRIL) the chain is Extracellular. Positions 729–754 (RYAVATTIWLVIGIVQVVFFAAFYER) form an intramembrane region, helical. A discontinuously helical transmembrane segment spans residues 729-768 (RYAVATTIWLVIGIVQVVFFAAFYERFIEDKIRQFVDLCS). The stretch at 755 to 759 (FIEDK) is an intramembrane region. The helical intramembrane region spans 760-768 (IRQFVDLCS). Residues 769–923 (MSNVSVFLLS…SIFYNDESHS (155 aa)) are Cytoplasmic-facing. Residues 924–926 (FSS) constitute an intramembrane region (helical). The chain crosses the membrane as a discontinuously helical span at residues 924-949 (FSSVLYYGNEATLLIFDLLFFCVVDL). The stretch at 927–933 (VLYYGNE) is an intramembrane region. The helical intramembrane region spans 934-949 (ATLLIFDLLFFCVVDL). The Extracellular segment spans residues 950 to 954 (ACQNF). Residues 955–982 (VLASFLTYLQQEIFRFIRNTVGQKNLAT) form a helical membrane-spanning segment. Topologically, residues 983-992 (KTLVDERFLI) are cytoplasmic.

As to quaternary structure, homodimer. Part of the tectonic-like complex (also named B9 complex). Interacts with DNAJB9, DNAJC10 and mutated SFTPC. Interacts with SYNE2 during the early establishment of cell polarity. Interacts (via C-terminus) with FLNA. Interacts with TMEM218. Interacts with WNT5A. Interacts with ROR2.

The protein resides in the cell membrane. The protein localises to the endoplasmic reticulum membrane. It is found in the cytoplasm. Its subcellular location is the cytoskeleton. It localises to the cilium basal body. Part of the tectonic-like complex which is required for tissue-specific ciliogenesis and may regulate ciliary membrane composition. Involved in centrosome migration to the apical cell surface during early ciliogenesis. Required for ciliary structure and function, including a role in regulating length and appropriate number through modulating centrosome duplication. Is a key regulator of stereociliary bundle orientation. Required for epithelial cell branching morphology. Essential for endoplasmic reticulum-associated degradation (ERAD) of surfactant protein C (sftpc). Involved in the negative regulation of canonical Wnt signaling, and activation of the non-canonical cascade stimulated by WNT5A. In non-canonical Wnt signaling, it may act as ROR2 coreceptor. In Rattus norvegicus (Rat), this protein is Meckelin (Tmem67).